Here is a 1022-residue protein sequence, read N- to C-terminus: Translation initiation factor IF-2 (1022 aa).

The span at 82-94 shows a compositional bias: basic and acidic residues; that stretch reads EQSRKTLEKEQHL. Disordered stretches follow at residues 82–129 and 342–436; these read EQSR…AVPA and SENK…QREL. A compositionally biased stretch (low complexity) spans 104–115; the sequence is ASKSSAKGSESA. Residues 375-384 are compositionally biased toward basic residues; it reads KAKKGKKKKK. A compositionally biased stretch (basic and acidic residues) spans 421–436; that stretch reads SEREREQEEGAAQREL. Residues 519–689 enclose the tr-type G domain; sequence TRPPVVTIMG…LTEAELRELK (171 aa). Positions 528-535 are G1; it reads GHVDHGKT. Position 528–535 (528–535) interacts with GTP; it reads GHVDHGKT. The interval 553–557 is G2; it reads GITQH. Positions 575-578 are G3; the sequence is DTPG. GTP is bound by residues 575–579 and 629–632; these read DTPGH and NKID. A G4 region spans residues 629–632; sequence NKID. The G5 stretch occupies residues 665 to 667; the sequence is SAK.

The protein belongs to the TRAFAC class translation factor GTPase superfamily. Classic translation factor GTPase family. IF-2 subfamily.

The protein localises to the cytoplasm. In terms of biological role, one of the essential components for the initiation of protein synthesis. Protects formylmethionyl-tRNA from spontaneous hydrolysis and promotes its binding to the 30S ribosomal subunits. Also involved in the hydrolysis of GTP during the formation of the 70S ribosomal complex. The sequence is that of Translation initiation factor IF-2 from Chlorobium chlorochromatii (strain CaD3).